Reading from the N-terminus, the 540-residue chain is Flavin-dependent halogenase ptaM (540 aa).

An N-terminal signal peptide occupies residues 1–21 (MSVPAQTSVLIVGGGPAGSYA). Residues G14, A17, and E47 each coordinate FAD. N-linked (GlcNAc...) asparagine glycans are attached at residues N159, N192, N204, and N243. 2 residues coordinate chloride: S330 and G331. N-linked (GlcNAc...) asparagine glycosylation is found at N480, N491, and N523.

It belongs to the flavin-dependent halogenase family.

It participates in secondary metabolite biosynthesis. Its function is as follows. Flavin-dependent halogenase; part of the gene cluster that mediates the biosynthesis of pestheic acid, a diphenyl ether which is a biosynthetic precursor of the unique chloropupukeananes. The biosynthesis initiates from condensation of acetate and malonate units catalyzed by the non-reducing PKS ptaA. As the ptaA protein is TE/CLC domain-deficient, hydrolysis and Claisen cyclization of the polyketide could be catalyzed by ptaB containing a beta-lactamase domain. The ptaB protein might hydrolyze the thioester bond between the ACP of ptaA and the intermediate to release atrochrysone carboxylic acid, which is spontaneously dehydrated to form endocrocin anthrone. Endocrocin anthrone is then converted to endocrocin, catalyzed by the anthrone oxygenase ptaC. Spontaneous decarboxylation of endocrocin occurs to generate emodin. An O-methyltransferase (ptaH or ptaI) could methylate emodin to form physcion. PtaJ could then catalyze the oxidative cleavage of physcion, and rotation of the intermediate could then afford desmethylisosulochrin. PtaF, a putative NADH-dependent oxidoreductase, might also participate in the oxidative cleavage step. Desmethylisosulochrin is then transformed by another O-methyltransferase (ptaH or ptaI) to form isosulochrin. Chlorination of isosulochrin by ptaM in the cyclohexadienone B ring then produces chloroisosulochrin. PtaE is responsible for the oxidative coupling reactions of both benzophenones isosulochrin and chloroisosulochrin to RES-1214-1 and pestheic acid respectively, regardless of chlorination. This is Flavin-dependent halogenase ptaM from Pestalotiopsis fici (strain W106-1 / CGMCC3.15140).